The primary structure comprises 914 residues: Alanine--tRNA ligase (914 aa).

4 residues coordinate Zn(2+): His-613, His-617, Cys-717, and His-721.

The protein belongs to the class-II aminoacyl-tRNA synthetase family. The cofactor is Zn(2+).

The protein localises to the cytoplasm. The enzyme catalyses tRNA(Ala) + L-alanine + ATP = L-alanyl-tRNA(Ala) + AMP + diphosphate. Its function is as follows. Catalyzes the attachment of alanine to tRNA(Ala) in a two-step reaction: alanine is first activated by ATP to form Ala-AMP and then transferred to the acceptor end of tRNA(Ala). Also edits incorrectly charged Ser-tRNA(Ala) and Gly-tRNA(Ala) via its editing domain. This is Alanine--tRNA ligase from Pyrococcus abyssi (strain GE5 / Orsay).